Consider the following 309-residue polypeptide: MPTASMTPNPFLSGSPEHAAAAGPLAAFAALPTGMQLAFAIVLGLVVGSFINVVVHRLPIMMKRAWLAEIAEATGAPCADDGLPARYNLCVPRSACPHCGHALRAWENVPVLSYIALRGRCRHCRTPIGARYPLIELASGALAAGALALFGPSGAALAAFGLCAALLAMSAIDMQTGFLPDSLTLPLLWAGLCVNLWGTFASLRAAVIGAIAGYLFLWCILWLFKLLRGIEGIGYGDLKLLAALGAWLGWEALPQVVLIAAVAGAAVGLVATWRGRMRFEEPLPFGPFLAAGGAATLFFGTPFYLLLGG.

A helical transmembrane segment spans residues 35 to 55 (MQLAFAIVLGLVVGSFINVVV). Zn(2+) contacts are provided by C96, C99, C121, and C124. A run of 6 helical transmembrane segments spans residues 147-167 (LALFGPSGAALAAFGLCAALL), 183-203 (LTLPLLWAGLCVNLWGTFASL), 207-227 (VIGAIAGYLFLWCILWLFKLL), 230-250 (IEGIGYGDLKLLAALGAWLGW), 253-273 (LPQVVLIAAVAGAAVGLVATW), and 288-308 (FLAAGGAATLFFGTPFYLLLG).

Belongs to the peptidase A24 family. Zn(2+) serves as cofactor.

It is found in the cell inner membrane. The enzyme catalyses Typically cleaves a -Gly-|-Phe- bond to release an N-terminal, basic peptide of 5-8 residues from type IV prepilin, and then N-methylates the new N-terminal amino group, the methyl donor being S-adenosyl-L-methionine.. Its function is as follows. Plays an essential role in type IV pili and type II pseudopili formation by proteolytically removing the leader sequence from substrate proteins and subsequently monomethylating the alpha-amino group of the newly exposed N-terminal phenylalanine. In Burkholderia pseudomallei (strain K96243), this protein is Prepilin leader peptidase/N-methyltransferase (gspO).